Consider the following 162-residue polypeptide: Neuritin-like protein (162 aa).

Positions 1–32 (MMCNCCHCHWRRRCQRLPCALTLLLLLPLAVA) are cleaved as a signal peptide. Alanine 136 carries the GPI-anchor amidated alanine lipid modification. A propeptide spans 137-162 (PALAPAPAPVLLAAALALACLLGPLA) (removed in mature form).

Belongs to the neuritin family.

The protein resides in the cell membrane. The protein is Neuritin-like protein (Nrn1l) of Mus musculus (Mouse).